A 128-amino-acid polypeptide reads, in one-letter code: Cytochrome b (128 aa).

3 helical membrane passes run 25 to 45 (FGSM…FLAI), 69 to 90 (WIMQ…YIHI), and 105 to 125 (WLSG…XMCY). Residues His75 and His89 each contribute to the heme b site. His126 lines the a ubiquinone pocket.

This sequence belongs to the cytochrome b family. As to quaternary structure, the cytochrome bc1 complex contains 3 respiratory subunits (MT-CYB, CYC1 and UQCRFS1), 2 core proteins (UQCRC1 and UQCRC2) and probably 6 low-molecular weight proteins. Requires heme b as cofactor.

Its subcellular location is the mitochondrion inner membrane. Component of the ubiquinol-cytochrome c reductase complex (complex III or cytochrome b-c1 complex) that is part of the mitochondrial respiratory chain. The b-c1 complex mediates electron transfer from ubiquinol to cytochrome c. Contributes to the generation of a proton gradient across the mitochondrial membrane that is then used for ATP synthesis. The polypeptide is Cytochrome b (MT-CYB) (Crotalus viridis viridis (Prairie rattlesnake)).